Here is an 86-residue protein sequence, read N- to C-terminus: Large ribosomal subunit protein bL27 (86 aa).

Residues 1–22 (MATKKAGGSSRNGRDSAGRRLG) are disordered.

It belongs to the bacterial ribosomal protein bL27 family.

The polypeptide is Large ribosomal subunit protein bL27 (Rickettsia peacockii (strain Rustic)).